The following is a 337-amino-acid chain: Hsp90 co-chaperone Cdc37-like 1 (337 aa).

The span at 1–11 shows a compositional bias: pro residues; that stretch reads MEQPWPPPGPW. Positions 1-42 are disordered; that stretch reads MEQPWPPPGPWSLPRAEGEAEEENDLDVFPSSPRCPQLPGGS. Positions 2–171 are self-association; the sequence is EQPWPPPGPW…YEQKIRHFGM (170 aa). Phosphoserine is present on residues S32 and S88. Positions 85-122 form a coiled coil; sequence NSESLDQEHAKAQIAVSELRQREEEWRQKEEALVQREK. The self-association and interaction with Hsp90 stretch occupies residues 147–277; it reads KDTEDEDKSE…SRVRLYSQSQ (131 aa). The tract at residues 267 to 337 is interaction with Hsp70; that stretch reads KSRVRLYSQS…DDEPKMMDTV (71 aa). The required for interaction with STIP1 stretch occupies residues 278-337; the sequence is SFQPMTVQNHVPHSGVGSIGLLESLPQNPDYLQYSINTALCSLNSVVHKEDDEPKMMDTV.

Belongs to the CDC37 family. As to quaternary structure, self-associates. Forms complexes with Hsp70 and Hsp90. Interacts with CDC37, FKBP4, PPID and STIP1.

It localises to the cytoplasm. Its function is as follows. Co-chaperone that binds to numerous proteins and promotes their interaction with Hsp70 and Hsp90. The sequence is that of Hsp90 co-chaperone Cdc37-like 1 (CDC37L1) from Pongo abelii (Sumatran orangutan).